The following is a 292-amino-acid chain: Protein rogdi homolog (292 aa).

The span at 1–12 (MEVQSLTITTNY) shows a compositional bias: polar residues. The segment at 1–25 (MEVQSLTITTNYPPKPASPNPQDIR) is disordered.

The protein belongs to the rogdi family.

The protein localises to the nucleus envelope. The sequence is that of Protein rogdi homolog from Caenorhabditis elegans.